The chain runs to 183 residues: Translocon-associated protein subunit beta (183 aa).

The N-terminal stretch at 1–17 is a signal peptide; it reads MRLLASVLLALFAVSHA. Residues 18 to 149 lie on the Lumenal side of the membrane; the sequence is EEGARLLASK…DRRFSPHFLD (132 aa). N-linked (GlcNAc...) asparagine glycosylation is found at Asn88 and Asn104. The chain crosses the membrane as a helical span at residues 150–169; sequence WAAFGVMTLPSIGIPLLLWY. The Cytoplasmic segment spans residues 170-183; the sequence is SSKRKYDTPKSKKN.

It belongs to the TRAP-beta family. Heterotetramer of TRAP-alpha, TRAP-beta, TRAP-delta and TRAP-gamma. Interacts with STING1.

It is found in the endoplasmic reticulum membrane. In terms of biological role, TRAP proteins are part of a complex whose function is to bind calcium to the ER membrane and thereby regulate the retention of ER resident proteins. In Canis lupus familiaris (Dog), this protein is Translocon-associated protein subunit beta (SSR2).